We begin with the raw amino-acid sequence, 270 residues long: Aliphatic sulfonates import ATP-binding protein SsuB 1 (270 aa).

One can recognise an ABC transporter domain in the interval 18 to 232; it reads VQLRNVVRQF…DSGQAGFQLI (215 aa). Position 50-57 (50-57) interacts with ATP; that stretch reads GASGSGKT. Positions 247–270 are disordered; that stretch reads PDTAPQASAPDSTFSELRRVASAR. Over residues 251–261 the composition is skewed to polar residues; the sequence is PQASAPDSTFS.

It belongs to the ABC transporter superfamily. Aliphatic sulfonates importer (TC 3.A.1.17.2) family. The complex is composed of two ATP-binding proteins (SsuB), two transmembrane proteins (SsuC) and a solute-binding protein (SsuA).

It is found in the cell inner membrane. The enzyme catalyses ATP + H2O + aliphatic sulfonate-[sulfonate-binding protein]Side 1 = ADP + phosphate + aliphatic sulfonateSide 2 + [sulfonate-binding protein]Side 1.. Functionally, part of the ABC transporter complex SsuABC involved in aliphatic sulfonates import. Responsible for energy coupling to the transport system. The chain is Aliphatic sulfonates import ATP-binding protein SsuB 1 from Pseudomonas syringae pv. tomato (strain ATCC BAA-871 / DC3000).